The sequence spans 446 residues: Nitrate/nitrite binding protein NrtA (446 aa).

The first 28 residues, 1–28 (MSNFSRSTRRKFMFTAGAAAIGGVVLHG), serve as a signal peptide directing secretion. A lipid anchor (N-palmitoyl cysteine) is attached at cysteine 29. Cysteine 29 carries S-diacylglycerol cysteine lipidation. Residues tryptophan 102, glutamine 155, histidine 196, glycine 240, and lysine 269 each coordinate nitrate.

It belongs to the CmpA/NrtA family. In terms of assembly, the complex is composed of two ATP-binding proteins (NrtC and NrtD), two transmembrane proteins (NrtB) and a solute-binding protein (NrtA).

It localises to the cell inner membrane. Functionally, part of the ABC transporter complex NrtABCD involved in nitrate uptake. The complex is probably also involved in nitrite transport. NrtA is the substrate-binding protein. Binds nitrate. This chain is Nitrate/nitrite binding protein NrtA, found in Synechocystis sp. (strain ATCC 27184 / PCC 6803 / Kazusa).